The following is a 508-amino-acid chain: Photosystem II CP47 reaction center protein (508 aa).

6 consecutive transmembrane segments (helical) span residues Ser21–Ser36, Ile101–Trp115, Gly140–Phe156, Ile203–Ser218, Val237–Val252, and Ser457–Arg472.

The protein belongs to the PsbB/PsbC family. PsbB subfamily. In terms of assembly, PSII is composed of 1 copy each of membrane proteins PsbA, PsbB, PsbC, PsbD, PsbE, PsbF, PsbH, PsbI, PsbJ, PsbK, PsbL, PsbM, PsbT, PsbX, PsbY, PsbZ, Psb30/Ycf12, at least 3 peripheral proteins of the oxygen-evolving complex and a large number of cofactors. It forms dimeric complexes. It depends on Binds multiple chlorophylls. PSII binds additional chlorophylls, carotenoids and specific lipids. as a cofactor.

Its subcellular location is the plastid. It is found in the chloroplast thylakoid membrane. Functionally, one of the components of the core complex of photosystem II (PSII). It binds chlorophyll and helps catalyze the primary light-induced photochemical processes of PSII. PSII is a light-driven water:plastoquinone oxidoreductase, using light energy to abstract electrons from H(2)O, generating O(2) and a proton gradient subsequently used for ATP formation. The protein is Photosystem II CP47 reaction center protein of Pelargonium hortorum (Common geranium).